The chain runs to 199 residues: Ras-related and estrogen-regulated growth inhibitor (199 aa).

Residues 13 to 20 (GRAGVGKS), 60 to 64 (DTAGQ), and 118 to 121 (NKAD) contribute to the GTP site.

The protein belongs to the small GTPase superfamily. Ras family.

The protein localises to the cytoplasm. It carries out the reaction GTP + H2O = GDP + phosphate + H(+). Binds GDP/GTP and possesses intrinsic GTPase activity. Has higher affinity for GDP than for GTP. This chain is Ras-related and estrogen-regulated growth inhibitor (RERG), found in Bos taurus (Bovine).